Reading from the N-terminus, the 58-residue chain is UPF0391 membrane protein Maqu_2901 (58 aa).

Helical transmembrane passes span Trp4–Ala24 and Ala28–Val48.

It belongs to the UPF0391 family.

The protein resides in the cell membrane. This Marinobacter nauticus (strain ATCC 700491 / DSM 11845 / VT8) (Marinobacter aquaeolei) protein is UPF0391 membrane protein Maqu_2901.